A 219-amino-acid chain; its full sequence is Vesicle-associated membrane protein 712 (219 aa).

The Cytoplasmic portion of the chain corresponds to 1–189 (MSILYALVAR…NNTVWWRNCK (189 aa)). Residues 7–111 (LVARGTVVLA…AMNDEFSRVL (105 aa)) form the Longin domain. Residues 126–186 (TISRIKGEMN…RRFNNTVWWR (61 aa)) form the v-SNARE coiled-coil homology domain. Residues 190–210 (LTLLLILVLLVIIYIGVAFAC) traverse the membrane as a helical; Anchor for type IV membrane protein segment. At 211-219 (HGPTLPSCV) the chain is on the vesicular side.

This sequence belongs to the synaptobrevin family. Expressed in flowers, leaves, stems and roots.

Its subcellular location is the vacuole membrane. It is found in the prevacuolar compartment membrane. Involved in the targeting and/or fusion of transport vesicles to their target membrane. The sequence is that of Vesicle-associated membrane protein 712 from Arabidopsis thaliana (Mouse-ear cress).